The following is a 274-amino-acid chain: Ribose-5-phosphate isomerase (274 aa).

It belongs to the ribose 5-phosphate isomerase family.

The protein resides in the cytoplasm. The catalysed reaction is aldehydo-D-ribose 5-phosphate = D-ribulose 5-phosphate. Its pathway is carbohydrate degradation; pentose phosphate pathway; D-ribose 5-phosphate from D-ribulose 5-phosphate (non-oxidative stage): step 1/1. The protein is Ribose-5-phosphate isomerase (rki1) of Schizosaccharomyces pombe (strain 972 / ATCC 24843) (Fission yeast).